The following is a 287-amino-acid chain: Pyridoxal 5'-phosphate synthase subunit PdxS (287 aa).

Asp21 serves as a coordination point for D-ribose 5-phosphate. Lys78 functions as the Schiff-base intermediate with D-ribose 5-phosphate in the catalytic mechanism. Gly150 contacts D-ribose 5-phosphate. Residue Arg162 coordinates D-glyceraldehyde 3-phosphate. D-ribose 5-phosphate contacts are provided by residues Gly211 and 232–233 (GS).

This sequence belongs to the PdxS/SNZ family. As to quaternary structure, in the presence of PdxT, forms a dodecamer of heterodimers.

The catalysed reaction is aldehydo-D-ribose 5-phosphate + D-glyceraldehyde 3-phosphate + L-glutamine = pyridoxal 5'-phosphate + L-glutamate + phosphate + 3 H2O + H(+). The protein operates within cofactor biosynthesis; pyridoxal 5'-phosphate biosynthesis. Catalyzes the formation of pyridoxal 5'-phosphate from ribose 5-phosphate (RBP), glyceraldehyde 3-phosphate (G3P) and ammonia. The ammonia is provided by the PdxT subunit. Can also use ribulose 5-phosphate and dihydroxyacetone phosphate as substrates, resulting from enzyme-catalyzed isomerization of RBP and G3P, respectively. This Tropheryma whipplei (strain TW08/27) (Whipple's bacillus) protein is Pyridoxal 5'-phosphate synthase subunit PdxS.